A 365-amino-acid chain; its full sequence is Histidinol-phosphate aminotransferase (365 aa).

The residue at position 220 (K220) is an N6-(pyridoxal phosphate)lysine.

This sequence belongs to the class-II pyridoxal-phosphate-dependent aminotransferase family. Histidinol-phosphate aminotransferase subfamily. Homodimer. The cofactor is pyridoxal 5'-phosphate.

The enzyme catalyses L-histidinol phosphate + 2-oxoglutarate = 3-(imidazol-4-yl)-2-oxopropyl phosphate + L-glutamate. The protein operates within amino-acid biosynthesis; L-histidine biosynthesis; L-histidine from 5-phospho-alpha-D-ribose 1-diphosphate: step 7/9. The polypeptide is Histidinol-phosphate aminotransferase (Neisseria meningitidis serogroup B (strain ATCC BAA-335 / MC58)).